A 485-amino-acid polypeptide reads, in one-letter code: UDP-N-acetylmuramate--L-alanine ligase (485 aa).

127–133 (GTHGKTT) lines the ATP pocket.

The protein belongs to the MurCDEF family.

The protein resides in the cytoplasm. The catalysed reaction is UDP-N-acetyl-alpha-D-muramate + L-alanine + ATP = UDP-N-acetyl-alpha-D-muramoyl-L-alanine + ADP + phosphate + H(+). It functions in the pathway cell wall biogenesis; peptidoglycan biosynthesis. Its function is as follows. Cell wall formation. In Shewanella frigidimarina (strain NCIMB 400), this protein is UDP-N-acetylmuramate--L-alanine ligase.